The sequence spans 109 residues: Juvenile hormone esterase, isoform A (109 aa).

The protein belongs to the type-B carboxylesterase/lipase family. In terms of tissue distribution, fat body, the site of their biosynthesis, and the hemolymph where it is secreted.

The catalysed reaction is juvenile hormone I + H2O = juvenile hormone I carboxylate + methanol + H(+). The enzyme catalyses juvenile hormone III + H2O = juvenile hormone III carboxylate + methanol + H(+). Functionally, JH esterase plays a crucial role in the decrease of JH activity in lepidopteran insects, by hydrolyzing the methyl ester of JH. It is also involved in the transport of JH. This is Juvenile hormone esterase, isoform A from Trichoplusia ni (Cabbage looper).